Reading from the N-terminus, the 750-residue chain is Polyribonucleotide nucleotidyltransferase (750 aa).

Residues Asp523 and Asp529 each coordinate Mg(2+). The KH domain maps to 589-648 (PRVTSISIPVDKIGEVIGPKGKMINSITEETGAEITIEDDGTIYVGAADGPSAEAAIDKI). Residues 660-729 (GERFLGTVVK…SRGKISLVVV (70 aa)) form the S1 motif domain.

This sequence belongs to the polyribonucleotide nucleotidyltransferase family. Mg(2+) is required as a cofactor.

It is found in the cytoplasm. The enzyme catalyses RNA(n+1) + phosphate = RNA(n) + a ribonucleoside 5'-diphosphate. Its function is as follows. Involved in mRNA degradation. Catalyzes the phosphorolysis of single-stranded polyribonucleotides processively in the 3'- to 5'-direction. This is Polyribonucleotide nucleotidyltransferase from Saccharopolyspora erythraea (strain ATCC 11635 / DSM 40517 / JCM 4748 / NBRC 13426 / NCIMB 8594 / NRRL 2338).